Consider the following 155-residue polypeptide: MRRRTAEKRNIVPDPIYGDILLSKFINRLMYDGKKSLAQQIVYSALERLAEATKENPIEAFHKAIDNVKPVVEVRSRRVGGSTYQVPFEVPENRATSLAIRWIVTSAQSKKGRDMVSKLSQELIDAYNNTGPSVKKKEDVHRMAEANRAFAHFRW.

This sequence belongs to the universal ribosomal protein uS7 family. In terms of assembly, part of the 30S ribosomal subunit. Contacts proteins S9 and S11.

In terms of biological role, one of the primary rRNA binding proteins, it binds directly to 16S rRNA where it nucleates assembly of the head domain of the 30S subunit. Is located at the subunit interface close to the decoding center, probably blocks exit of the E-site tRNA. In Petrotoga mobilis (strain DSM 10674 / SJ95), this protein is Small ribosomal subunit protein uS7.